The primary structure comprises 315 residues: Protoheme IX farnesyltransferase (315 aa).

A run of 9 helical transmembrane segments spans residues 38-58, 62-82, 111-131, 132-152, 159-179, 184-204, 233-253, 255-275, and 293-313; these read IIELLLITTVPVMFLAEQGVP, LVLLTCVGGYLSAGGANALNM, LVFGITLAIVSTLLFGFTVNW, LSAWLSLGALLFYVVVYTMIL, NIVWGGIAGCLPVLIGWSAVT, WAPVILFGVMFFWTPPHYWPL, IVIYSWVMVVVSLLLQPLGYT, WFYTAVALAAGGMWLWEAHGL, and LFHWSITYVSVLFLAIAVDPF.

This sequence belongs to the UbiA prenyltransferase family. Protoheme IX farnesyltransferase subfamily.

The protein localises to the cell membrane. The catalysed reaction is heme b + (2E,6E)-farnesyl diphosphate + H2O = Fe(II)-heme o + diphosphate. The protein operates within porphyrin-containing compound metabolism; heme O biosynthesis; heme O from protoheme: step 1/1. Functionally, converts heme B (protoheme IX) to heme O by substitution of the vinyl group on carbon 2 of heme B porphyrin ring with a hydroxyethyl farnesyl side group. The sequence is that of Protoheme IX farnesyltransferase from Streptomyces coelicolor (strain ATCC BAA-471 / A3(2) / M145).